We begin with the raw amino-acid sequence, 561 residues long: Putative transport protein YbjL (561 aa).

Transmembrane regions (helical) follow at residues leucine 8 to glycine 28, leucine 32 to glutamine 52, phenylalanine 66 to phenylalanine 86, methionine 94 to phenylalanine 114, and asparagine 158 to alanine 178. 2 consecutive RCK C-terminal domains span residues leucine 202 to asparagine 288 and valine 292 to phenylalanine 373. The next 5 helical transmembrane spans lie at leucine 383–phenylalanine 403, phenylalanine 406–methionine 426, valine 451–isoleucine 471, methionine 475–alanine 495, and alanine 540–leucine 560.

This sequence belongs to the AAE transporter (TC 2.A.81) family. YbjL subfamily.

The protein resides in the cell membrane. The chain is Putative transport protein YbjL from Escherichia fergusonii (strain ATCC 35469 / DSM 13698 / CCUG 18766 / IAM 14443 / JCM 21226 / LMG 7866 / NBRC 102419 / NCTC 12128 / CDC 0568-73).